Reading from the N-terminus, the 677-residue chain is Polyunsaturated fatty acid lipoxygenase ALOX8 (677 aa).

The 124-residue stretch at 2-125 (AKCRVRVSTG…ELVLREGAAK (124 aa)) folds into the PLAT domain. The Ca(2+) site is built by G15, G17, D39, H40, G42, E44, D86, and A87. Residues 126–677 (VSWQDHHPTL…PPLIENSVSI (552 aa)) form the Lipoxygenase domain. Fe cation-binding residues include H374, H379, H554, and I677.

This sequence belongs to the lipoxygenase family. Fe cation serves as cofactor. Expressed in epidermis and brain. No expression found in heart, spleen, liver, skeletal muscle, kidney or testis.

It is found in the cytoplasm. The protein resides in the cytosol. Its subcellular location is the membrane. The enzyme catalyses (9Z,12Z)-octadecadienoate + O2 = (9S)-hydroperoxy-(10E,12Z)-octadecadienoate. It catalyses the reaction (5Z,8Z,11Z,14Z)-eicosatetraenoate + O2 = (8S)-hydroperoxy-(5Z,9E,11Z,14Z)-eicosatetraenoate. The catalysed reaction is (15S)-hydroperoxy-(5Z,8Z,11Z,13E)-eicosatetraenoate + O2 = (8S,15S)-dihydroperoxy-(5Z,9E,11Z,13E)-eicosatetraenoate. It carries out the reaction (8S)-hydroperoxy-(5Z,9E,11Z,14Z)-eicosatetraenoate + O2 = (8S,15S)-dihydroperoxy-(5Z,9E,11Z,13E)-eicosatetraenoate. The enzyme catalyses 1-octadecanoyl-2-(5Z,8Z,11Z,14Z-eicosatetraenoyl)-sn-glycero-3-phosphocholine + O2 = 1-octadecanoyl-2-(15-hydroperoxy-5Z,8Z,11Z,13E-eicosatetraenoyl)-sn-glycero-3-phosphocholine. It catalyses the reaction a 1-acyl-2-(5Z,8Z,11Z,14Z-eicosatetraenoyl)-sn-glycero-3-phospho-(1D-myo-inositol) + O2 = a 1-acyl-2-(15-hydroperoxy-5Z,8Z,11Z,13E-eicosatetraenoyl)-sn-glycero-3-phospho-(1D-myo-inositol). The catalysed reaction is a 1-acyl-2-(8Z,11Z,14Z-eicosatrienoyl)-sn-glycero-3-phospho-(1D-myo-inositol) + O2 = a 1-acyl-2-(15-hydroperoxy-8Z,11Z,13E-eicosatrienoyl)-sn-glycero-3-phospho-(1D-myo-inositol). It carries out the reaction (5Z,8Z,11Z,14Z)-eicosatetraenoate + O2 = 9-hydroperoxy-(5Z,7E,11Z,14Z)-eicosatetraenoate. The enzyme catalyses (5Z,8Z,11Z,14Z)-eicosatetraenoate + O2 = 11-hydroperoxy-(5Z,8Z,12E,14Z)-eicosatetraenoate. It catalyses the reaction (8Z,11Z,14Z)-eicosatrienoate + O2 = 15-hydroperoxy-(8Z,11Z,13E)-eicosatrienoate. Its pathway is lipid metabolism; hydroperoxy eicosatetraenoic acid biosynthesis. Functionally, non-heme iron-containing dioxygenase that catalyzes the stereo-specific peroxidation of free and esterified polyunsaturated fatty acids generating a spectrum of bioactive lipid mediators. Catalyzes the peroxidation of arachidonate and linoleate into (8S)-HPETE and (9S)-HPODE respectively. In addition to generate (8S)-HPETE from free arachidonic acid (AA), may produce other HETE isomers from phospholipid-esterified polyunsaturated fatty acids and minor products derived from (8S)-HPETE itself that may include leukotriene A4 and 8,15-diHPETE. With free arachidonate as substrate, has no detectable 15S-lipoxygenase activity and only displays a 8S-lipoxygenase activity. However may have a 15S-lipoxygenase activity with (8S)-HPETE to produce (8S,15S)-diHPETE and when oxidizes directly arachidonic acid esterified to membrane-bound phospholipids to produce a phospholipid-esterified 15-HpETE. May also catalyze (15S)-HPETE peroxidation to produce 8,15-diHPETE. May play a role in keratinocyte differentiation through activation of the peroxisome proliferator activated receptor signaling pathway. This chain is Polyunsaturated fatty acid lipoxygenase ALOX8, found in Mus musculus (Mouse).